A 629-amino-acid polypeptide reads, in one-letter code: G1-specific transcription factors activator MSA1 (629 aa).

Residues 1-11 show a composition bias toward basic residues; sequence MDKSMIKKRGR. Disordered regions lie at residues 1–60, 83–106, 217–286, 455–485, and 586–629; these read MDKS…KRRL, STPTKKSSTNGSTPISTPSSNDSY, YCDT…SSLQ, VQVQSQSNSPTQRQQQQRQFQIPPPHINMNS, and PNLH…IDDQ. Positions 21-37 are enriched in polar residues; sequence PLQSPMAHSSMQVQKQG. A compositionally biased stretch (polar residues) spans 245 to 260; that stretch reads IETSASPIGSARNNNI. Low complexity-rich tracts occupy residues 261-277 and 455-475; these read LLSQPPQSPPSSAQLKP and VQVQSQSNSPTQRQQQQRQFQ. Ser-268 bears the Phosphoserine mark. The span at 614-629 shows a compositional bias: basic and acidic residues; the sequence is KQDDARTALKRLIDDQ.

In terms of assembly, interacts with transcription complexes SCB-binding factor (SBF) and MCB-binding factor (MBF) at their target promoters. Interacts with MBP1 and SWI6. Post-translationally, phosphorylated by CDC28.

Activator of G1-specific transcription factors, MBF and SBF. Promotes both the timing of G1-specific gene transcription and cell cycle initiation. Associates with SBF- and MBF-regulated target promoters and this binding is maximal during the G1 phase, prior to maximum budding. Affects cell cycle initiation by advancing the timing of transcription of G1-specific genes. Overexpression advances the timing of SBF-dependent transcription and budding. Depletion delays both indicators of cell cycle initiation. In Saccharomyces cerevisiae (strain ATCC 204508 / S288c) (Baker's yeast), this protein is G1-specific transcription factors activator MSA1 (MSA1).